The sequence spans 391 residues: RAB6A-GEF complex partner protein 2 (391 aa).

This sequence belongs to the RGP1 family. In terms of assembly, forms a complex with RIC1; the interaction enhances RAB6A GTPase activity. Interacts with RIC1. Interacts with RAB6A; the interaction is direct with a preference for RAB6A-GDP. Interacts with RAB33B.

It localises to the cytoplasm. It is found in the cytosol. Its subcellular location is the membrane. Functionally, the RIC1-RGP1 complex acts as a guanine nucleotide exchange factor (GEF), which activates RAB6A by exchanging bound GDP for free GTP and may thereby required for efficient fusion of endosome-derived vesicles with the Golgi compartment. The RIC1-RGP1 complex participates in the recycling of mannose-6-phosphate receptors. This Homo sapiens (Human) protein is RAB6A-GEF complex partner protein 2.